The chain runs to 590 residues: 2-hydroxyacyl-CoA lyase (590 aa).

2-hydroxyisobutanoyl-CoA contacts are provided by residues Gly-43, Gln-128, Gln-255, 273–274 (RS), and Arg-362. Position 410–412 (410–412 (GDL)) interacts with thiamine diphosphate. Arg-417 is a 2-hydroxyisobutanoyl-CoA binding site. Gly-433 lines the thiamine diphosphate pocket. Residue Asp-460 coordinates Mg(2+). Thiamine diphosphate is bound by residues 461–462 (GA) and 487–492 (NRAWNI). Asn-487 and Ala-489 together coordinate Mg(2+). The active-site Proton acceptor is the Glu-493. Position 561–564 (561–564 (DSGK)) interacts with 2-hydroxyisobutanoyl-CoA. Residues 566–590 (LGFVPDYQALTPWNDAEVARRQEGI) form a C-terminal lid region.

Belongs to the TPP enzyme family. In terms of assembly, a homotetramer formed by a dimer of dimers; active sites are located in the dimer interface. Mg(2+) serves as cofactor. The cofactor is thiamine diphosphate.

The enzyme catalyses 2-hydroxyisobutanoyl-CoA = formyl-CoA + acetone. Activity is stimulated by thiamine diphosphate. Its function is as follows. A lyase that reversibly degrades 2-hydroxyisobutyryl-CoA (2-HIB-CoA) to acetone and formyl-CoA. Probably also cleaves 2-hydroxy-2-methylbutyryl-CoA to butanone and formyl-CoA. Does not act on 2-hydroxy-2-ethylbutyryl-CoA. A C-terminal lid closes the active site upon substrate binding, and with residues Leu-127 and Ile-492 restricts the size of the active site cavity so it can only use short-chain (C4 and C5) acyl substrates. Part of a pathway that allows cells to grow on 2-methylpropane-1,2-diol or 2-hydroxyisobutyric acid (2-HIBA) as a sole carbon source. The sequence is that of 2-hydroxyacyl-CoA lyase from Actinomycetospora chiangmaiensis (strain DSM 45062 / JCM 15998 / CCTCC AA 205017 / NBRC 104400 / YIM 0006).